An 858-amino-acid chain; its full sequence is Leucine--tRNA ligase (858 aa).

The 'HIGH' region signature appears at Pro53 to His63. The 'KMSKS' region motif lies at Lys622–Ser626. Residue Lys625 participates in ATP binding.

The protein belongs to the class-I aminoacyl-tRNA synthetase family.

It localises to the cytoplasm. The enzyme catalyses tRNA(Leu) + L-leucine + ATP = L-leucyl-tRNA(Leu) + AMP + diphosphate. The chain is Leucine--tRNA ligase from Prochlorococcus marinus subsp. pastoris (strain CCMP1986 / NIES-2087 / MED4).